We begin with the raw amino-acid sequence, 454 residues long: Chaperone SurA (454 aa).

The signal sequence occupies residues 1–28 (MKISSFRKGRWLGALALFAVVCWSMADA). 2 consecutive PpiC domains span residues 177–278 (DREY…KMLA) and 287–386 (LTKT…QVLE). Residues 431-454 (LDETPASPGEDAPAGEDSPETFMR) form a disordered region. Residues 443–454 (PAGEDSPETFMR) are compositionally biased toward acidic residues.

It is found in the periplasm. The enzyme catalyses [protein]-peptidylproline (omega=180) = [protein]-peptidylproline (omega=0). In terms of biological role, chaperone involved in the correct folding and assembly of outer membrane proteins. Recognizes specific patterns of aromatic residues and the orientation of their side chains, which are found more frequently in integral outer membrane proteins. May act in both early periplasmic and late outer membrane-associated steps of protein maturation. This Methylococcus capsulatus (strain ATCC 33009 / NCIMB 11132 / Bath) protein is Chaperone SurA.